The chain runs to 677 residues: uncharacterized protein (677 aa).

The interval 1–87 (MGRHSKPDPE…PTGAEPIAAA (87 aa)) is disordered. The span at 17–29 (SDGHAAEQQHWED) shows a compositional bias: basic and acidic residues. Over residues 51–64 (GHYSAVGGYSASGS) the composition is skewed to low complexity. The next 4 helical transmembrane spans lie at 115-135 (VSIG…GVIL), 192-212 (VAVA…IGKW), 313-333 (EAVA…IGAV), and 474-494 (ATLA…IMLD).

The protein localises to the cell membrane. This is an uncharacterized protein from Mycobacterium tuberculosis (strain CDC 1551 / Oshkosh).